Here is a 181-residue protein sequence, read N- to C-terminus: ATP synthase subunit delta (181 aa).

It belongs to the ATPase delta chain family. In terms of assembly, F-type ATPases have 2 components, F(1) - the catalytic core - and F(0) - the membrane proton channel. F(1) has five subunits: alpha(3), beta(3), gamma(1), delta(1), epsilon(1). F(0) has three main subunits: a(1), b(2) and c(10-14). The alpha and beta chains form an alternating ring which encloses part of the gamma chain. F(1) is attached to F(0) by a central stalk formed by the gamma and epsilon chains, while a peripheral stalk is formed by the delta and b chains.

The protein resides in the cell inner membrane. Functionally, f(1)F(0) ATP synthase produces ATP from ADP in the presence of a proton or sodium gradient. F-type ATPases consist of two structural domains, F(1) containing the extramembraneous catalytic core and F(0) containing the membrane proton channel, linked together by a central stalk and a peripheral stalk. During catalysis, ATP synthesis in the catalytic domain of F(1) is coupled via a rotary mechanism of the central stalk subunits to proton translocation. In terms of biological role, this protein is part of the stalk that links CF(0) to CF(1). It either transmits conformational changes from CF(0) to CF(1) or is implicated in proton conduction. This chain is ATP synthase subunit delta, found in Desulfotalea psychrophila (strain LSv54 / DSM 12343).